A 352-amino-acid polypeptide reads, in one-letter code: Rhodopsin (352 aa).

The Extracellular portion of the chain corresponds to methionine 1 to alanine 36. N-linked (GlcNAc...) asparagine glycans are attached at residues asparagine 2 and asparagine 15. The helical transmembrane segment at tyrosine 37–valine 61 threads the bilayer. Residues threonine 62–asparagine 73 are Cytoplasmic-facing. A helical transmembrane segment spans residues tyrosine 74–tyrosine 96. The Extracellular segment spans residues threonine 97 to cysteine 110. The cysteines at positions 110 and 187 are disulfide-linked. A helical membrane pass occupies residues asparagine 111–isoleucine 133. A 'Ionic lock' involved in activated form stabilization motif is present at residues glutamate 134 to tryptophan 136. Over glutamate 134–histidine 152 the chain is Cytoplasmic. Residues alanine 153–valine 173 traverse the membrane as a helical segment. Residues glycine 174 to serine 202 are Extracellular-facing. Residue asparagine 200 is glycosylated (N-linked (GlcNAc...) asparagine). Residues phenylalanine 203–glycine 224 form a helical membrane-spanning segment. Residues arginine 225–arginine 252 lie on the Cytoplasmic side of the membrane. A helical transmembrane segment spans residues methionine 253–tyrosine 274. Topologically, residues isoleucine 275 to proline 286 are extracellular. Residues phenylalanine 287–cysteine 308 form a helical membrane-spanning segment. Lysine 296 bears the N6-(retinylidene)lysine mark. At methionine 309–alanine 352 the chain is on the cytoplasmic side. S-palmitoyl cysteine attachment occurs at residues cysteine 322 and cysteine 323. Residues glutamate 331–alanine 352 are disordered. Over residues serine 342–alanine 352 the composition is skewed to low complexity.

This sequence belongs to the G-protein coupled receptor 1 family. Opsin subfamily. Post-translationally, phosphorylated on some or all of the serine and threonine residues present in the C-terminal region. In terms of processing, contains one covalently linked retinal chromophore.

The protein resides in the membrane. It is found in the cell projection. It localises to the cilium. The protein localises to the photoreceptor outer segment. Functionally, photoreceptor required for image-forming vision at low light intensity. While most salt water fish species use retinal as chromophore, most freshwater fish use 3-dehydroretinal, or a mixture of retinal and 3-dehydroretinal. Light-induced isomerization of 11-cis to all-trans retinal triggers a conformational change that activates signaling via G-proteins. Subsequent receptor phosphorylation mediates displacement of the bound G-protein alpha subunit by arrestin and terminates signaling. The sequence is that of Rhodopsin (rho) from Zosterisessor ophiocephalus (Grass goby).